The following is a 589-amino-acid chain: Serine/threonine-protein phosphatase 2A 65 kDa regulatory subunit A alpha isoform (589 aa).

Alanine 2 carries the N-acetylalanine modification. HEAT repeat units lie at residues 8–46 (DSLY…GVER), 47–84 (TRSE…GGPE), 85–123 (YVHC…SPSD), 124–161 (LEAH…VSSA), 162–200 (VKAE…ELDN), 201–239 (VKSE…PQED), 240–278 (LEAL…GPEI), 279–321 (TKTD…RENV), 322–360 (IMTQ…GKDN), 361–399 (TIEH…GIRQ), 400–438 (LSQS…GVEF), 439–477 (FDEK…GKEW), 478–516 (AHAT…GQDI), 517–555 (TTKH…DNST), and 556–589 (LQSE…LSLA). An N6-acetyllysine modification is found at lysine 280.

Belongs to the phosphatase 2A regulatory subunit A family. PP2A consists of a common heterodimeric core enzyme, composed of PPP2CA a 36 kDa catalytic subunit (subunit C) and PPP2R1A a 65 kDa constant regulatory subunit (PR65 or subunit A), that associates with a variety of regulatory subunits. Proteins that associate with the core dimer include three families of regulatory subunits B (the R2/B/PR55/B55, R3/B''/PR72/PR130/PR59 and R5/B'/B56 families), the 48 kDa variable regulatory subunit, viral proteins, and cell signaling molecules. Found in a complex with at least ARL2, PPP2CB, PPP2R1A, PPP2R2A, PPP2R5E and TBCD. Interacts with the PP2A C catalytic subunit PPP2CA. Interacts with the PP2A B subunit PPP2R2A. Interacts with the PP2A B subunit PPP2R5D. Interacts with FOXO1; the interaction dephosphorylates FOXO1 on AKT-mediated phosphorylation sites. Interacts with IPO9. Interacts with TP53 and SGO1. Interacts with PLA2G16; this interaction might decrease PP2A activity. Interacts with CTTNBP2NL. Interacts with GNA12; the interaction promotes protein phosphatase 2A activation causing dephosphorylation of MAPT. Interacts with CIP2A; this interaction stabilizes CIP2A. Interacts with PABIR1/FAM122A. Interacts with ADCY8; antagonizes interaction between ADCY8 and calmodulin. Interacts with CRTC3 (when phosphorylated at 'Ser-391'). Interacts with SPRY2. Part of the core of STRIPAK complexes composed of PP2A catalytic and scaffolding subunits, the striatins (PP2A regulatory subunits), the striatin-associated proteins MOB4, STRIP1 and STRIP2, PDCD10 and members of the STE20 kinases, such as STK24 and STK26. Component of the Integrator-PP2A (INTAC) complex, composed of the Integrator core complex and protein phosphatase 2A subunits PPP2CA and PPP2R1A.

The protein resides in the cytoplasm. The protein localises to the nucleus. Its subcellular location is the chromosome. It localises to the centromere. It is found in the lateral cell membrane. The protein resides in the cell projection. The protein localises to the dendrite. In terms of biological role, the PR65 subunit of protein phosphatase 2A serves as a scaffolding molecule to coordinate the assembly of the catalytic subunit and a variable regulatory B subunit. Upon interaction with GNA12 promotes dephosphorylation of microtubule associated protein TAU/MAPT. Required for proper chromosome segregation and for centromeric localization of SGO1 in mitosis. Together with RACK1 adapter, mediates dephosphorylation of AKT1 at 'Ser-473', preventing AKT1 activation and AKT-mTOR signaling pathway. Dephosphorylation of AKT1 is essential for regulatory T-cells (Treg) homeostasis and stability. Part of the striatin-interacting phosphatase and kinase (STRIPAK) complexes. STRIPAK complexes have critical roles in protein (de)phosphorylation and are regulators of multiple signaling pathways including Hippo, MAPK, nuclear receptor and cytoskeleton remodeling. Different types of STRIPAK complexes are involved in a variety of biological processes such as cell growth, differentiation, apoptosis, metabolism and immune regulation. Key mediator of a quality checkpoint during transcription elongation as part of the Integrator-PP2A (INTAC) complex. The INTAC complex drives premature transcription termination of transcripts that are unfavorably configured for transcriptional elongation: within the INTAC complex, acts as a scaffolding subunit for PPP2CA, which catalyzes dephosphorylation of the C-terminal domain (CTD) of Pol II subunit POLR2A/RPB1 and SUPT5H/SPT5, thereby preventing transcriptional elongation. Regulates the recruitment of the SKA complex to kinetochores. In Mus musculus (Mouse), this protein is Serine/threonine-protein phosphatase 2A 65 kDa regulatory subunit A alpha isoform (Ppp2r1a).